Reading from the N-terminus, the 575-residue chain is Acyloxyacyl hydrolase (575 aa).

The N-terminal stretch at 1 to 23 is a signal peptide; it reads MQSPWKILTVAPLFLLLSLQSSA. A propeptide spanning residues 24–34 is cleaved from the precursor; that stretch reads SPANDDQSRPS. One can recognise a Saposin B-type domain in the interval 37–118; sequence NGHTCVGCVL…HTLEFCKQNT (82 aa). Residues 38-70 form an important for enzyme activity, localization to cytoplasmic vesicles, and protein stability region; it reads GHTCVGCVLVVSVIEQLAQVHNSTVQASMERLC. Intrachain disulfides connect Cys-41–Cys-114, Cys-44–Cys-108, Cys-70–Cys-83, Cys-123–Cys-453, Cys-160–Cys-169, Cys-206–Cys-230, Cys-249–Cys-329, and Cys-376–Cys-459. An N-linked (GlcNAc...) asparagine glycan is attached at Asn-59. Residues 173 to 177 form a lipopolysaccharide binding region; sequence KLAME. 15 residues coordinate Ca(2+): Asp-184, Asp-186, Asp-188, Tyr-190, Asp-205, Asn-207, Asp-208, Asp-210, Val-213, Asp-223, Asp-227, Asn-229, Asn-231, Ile-233, and Glu-245. Asn-207 carries N-linked (GlcNAc...) asparagine glycosylation. Residue Ser-263 is part of the active site. N-linked (GlcNAc...) asparagine glycosylation is found at Asn-409 and Asn-466.

In terms of assembly, heterodimer of the large and small subunits; disulfide-linked. It depends on Ca(2+) as a cofactor. Cleaved into a large and a small subunit. In terms of processing, the small subunit is N-glycosylated.

Its subcellular location is the secreted. It localises to the cytoplasmic vesicle. The catalysed reaction is a 3-(acyloxy)acyl derivative of bacterial toxin + H2O = a 3-hydroxyacyl derivative of bacterial toxin + a fatty acid + H(+). Inhibited by EDTA. Its function is as follows. Removes the secondary (acyloxyacyl-linked) fatty acyl chains from the lipid A region of bacterial lipopolysaccharides. By breaking down LPS, terminates the host response to bacterial infection and prevents prolonged and damaging inflammatory responses. In peritoneal macrophages, seems to be important for recovery from a state of immune tolerance following infection by Gram-negative bacteria. This is Acyloxyacyl hydrolase from Homo sapiens (Human).